Reading from the N-terminus, the 627-residue chain is Pentatricopeptide repeat-containing protein At2g15630, mitochondrial (627 aa).

The transit peptide at 1-29 (MRRFTVPCILRHRISILSGAGYSPAAARL) directs the protein to the mitochondrion. PPR repeat units lie at residues 154–188 (STILFDLLVRCCCQLRMVDEAIECFYLMKEKGFYP), 189–223 (KTETCNHILTLLSRLNRIENAWVFYADMYRMEIKS), 224–258 (NVYTFNIMINVLCKEGKLKKAKGFLGIMEVFGIKP), 259–293 (TIVTYNTLVQGFSLRGRIEGARLIISEMKSKGFQP), 294–324 (DMQTYNPILSWMCNEGRASEVLREMKEIGLV), 326–360 (DSVSYNILIRGCSNNGDLEMAFAYRDEMVKQGMVP), 361–395 (TFYTYNTLIHGLFMENKIEAAEILIREIREKGIVL), 396–430 (DSVTYNILINGYCQHGDAKKAFALHDEMMTDGIQP), 431–465 (TQFTYTSLIYVLCRKNKTREADELFEKVVGKGMKP), 466–500 (DLVMMNTLMDGHCAIGNMDRAFSLLKEMDMMSINP), 501–535 (DDVTYNCLMRGLCGEGKFEEARELMGEMKRRGIKP), 536–570 (DHISYNTLISGYSKKGDTKHAFMVRDEMLSLGFNP), and 571–605 (TLLTYNALLKGLSKNQEGELAEELLREMKSEGIVP).

Belongs to the PPR family. P subfamily.

The protein localises to the mitochondrion. The chain is Pentatricopeptide repeat-containing protein At2g15630, mitochondrial from Arabidopsis thaliana (Mouse-ear cress).